Here is a 154-residue protein sequence, read N- to C-terminus: Myoglobin (154 aa).

The region spanning 2–148 is the Globin domain; it reads GLSDGEWQLV…FRKDIAAKYK (147 aa). Position 4 is a phosphoserine (Ser4). His65 serves as a coordination point for nitrite. His65 contacts O2. Thr68 carries the phosphothreonine modification. His94 contacts heme b.

It belongs to the globin family. As to quaternary structure, monomeric.

Its subcellular location is the cytoplasm. It is found in the sarcoplasm. The enzyme catalyses Fe(III)-heme b-[protein] + nitric oxide + H2O = Fe(II)-heme b-[protein] + nitrite + 2 H(+). It catalyses the reaction H2O2 + AH2 = A + 2 H2O. Functionally, monomeric heme protein which primary function is to store oxygen and facilitate its diffusion within muscle tissues. Reversibly binds oxygen through a pentacoordinated heme iron and enables its timely and efficient release as needed during periods of heightened demand. Depending on the oxidative conditions of tissues and cells, and in addition to its ability to bind oxygen, it also has a nitrite reductase activity whereby it regulates the production of bioactive nitric oxide. Under stress conditions, like hypoxia and anoxia, it also protects cells against reactive oxygen species thanks to its pseudoperoxidase activity. This Peponocephala electra (Melon-headed whale) protein is Myoglobin (MB).